The sequence spans 300 residues: Inosose dehydratase (300 aa).

It belongs to the IolE/MocC family. The cofactor is glutathione. Co(2+) serves as cofactor. It depends on Mn(2+) as a cofactor.

The catalysed reaction is scyllo-inosose = 3D-3,5/4-trihydroxycyclohexane-1,2-dione + H2O. It participates in polyol metabolism; myo-inositol degradation into acetyl-CoA; acetyl-CoA from myo-inositol: step 2/7. Functionally, catalyzes the dehydration of inosose (2-keto-myo-inositol, 2KMI or 2,4,6/3,5-pentahydroxycyclohexanone) to 3D-(3,5/4)-trihydroxycyclohexane-1,2-dione (D-2,3-diketo-4-deoxy-epi-inositol). This chain is Inosose dehydratase, found in Bacillus licheniformis (strain ATCC 14580 / DSM 13 / JCM 2505 / CCUG 7422 / NBRC 12200 / NCIMB 9375 / NCTC 10341 / NRRL NRS-1264 / Gibson 46).